Reading from the N-terminus, the 244-residue chain is Carbonic anhydrase (244 aa).

Positions 1-19 are cleaved as a signal peptide; that stretch reads MKGKLSIALMLSVCFSASA. Positions 23–244 constitute an Alpha-carbonic anhydrase domain; the sequence is VHWGYEGNGD…QPLNGRIIIH (222 aa). Cysteine 46 and cysteine 199 are disulfide-bonded. Histidine 84 (proton acceptor) is an active-site residue. Positions 109, 111, and 128 each coordinate Zn(2+). 195-196 provides a ligand contact to substrate; it reads TT.

It belongs to the alpha-carbonic anhydrase family. Requires Zn(2+) as cofactor.

It is found in the periplasm. The catalysed reaction is hydrogencarbonate + H(+) = CO2 + H2O. Its function is as follows. Reversible hydration of carbon dioxide. The protein is Carbonic anhydrase (cah) of Pectobacterium carotovorum (Erwinia carotovora).